The chain runs to 341 residues: S-adenosylmethionine:tRNA ribosyltransferase-isomerase (341 aa).

Belongs to the QueA family. Monomer.

The protein localises to the cytoplasm. The catalysed reaction is 7-aminomethyl-7-carbaguanosine(34) in tRNA + S-adenosyl-L-methionine = epoxyqueuosine(34) in tRNA + adenine + L-methionine + 2 H(+). It functions in the pathway tRNA modification; tRNA-queuosine biosynthesis. Transfers and isomerizes the ribose moiety from AdoMet to the 7-aminomethyl group of 7-deazaguanine (preQ1-tRNA) to give epoxyqueuosine (oQ-tRNA). The sequence is that of S-adenosylmethionine:tRNA ribosyltransferase-isomerase from Alkaliphilus metalliredigens (strain QYMF).